A 150-amino-acid chain; its full sequence is UPF0178 protein DMR_20710 (150 aa).

It belongs to the UPF0178 family.

The sequence is that of UPF0178 protein DMR_20710 from Solidesulfovibrio magneticus (strain ATCC 700980 / DSM 13731 / RS-1) (Desulfovibrio magneticus).